The sequence spans 148 residues: Small ribosomal subunit protein bS6 (148 aa).

The interval 96-148 is disordered; it reads HEEGQSAMLTRRDDRRERDGDDRPRRREGGFDRGDRGDRSPRRPRDNEAGEGA.

This sequence belongs to the bacterial ribosomal protein bS6 family.

In terms of biological role, binds together with bS18 to 16S ribosomal RNA. The chain is Small ribosomal subunit protein bS6 from Brucella suis (strain ATCC 23445 / NCTC 10510).